A 127-amino-acid polypeptide reads, in one-letter code: Holo-[acyl-carrier-protein] synthase (127 aa).

Mg(2+) is bound by residues Asp8 and Glu57.

Belongs to the P-Pant transferase superfamily. AcpS family. Mg(2+) serves as cofactor.

The protein resides in the cytoplasm. The catalysed reaction is apo-[ACP] + CoA = holo-[ACP] + adenosine 3',5'-bisphosphate + H(+). Its function is as follows. Transfers the 4'-phosphopantetheine moiety from coenzyme A to a Ser of acyl-carrier-protein. In Vesicomyosocius okutanii subsp. Calyptogena okutanii (strain HA), this protein is Holo-[acyl-carrier-protein] synthase.